Consider the following 115-residue polypeptide: Ig heavy chain V-III region J606 (115 aa).

One can recognise an Ig-like domain in the interval 1–114 (EVKLEESGGG…WGQGTLVTVS (114 aa)). C22 and C98 form a disulfide bridge.

The protein is Ig heavy chain V-III region J606 of Mus musculus (Mouse).